We begin with the raw amino-acid sequence, 352 residues long: Aspartic protease Bla g 2 (352 aa).

Positions 1–19 (MIGLKLVTVLFAVATITHA) are cleaved as a signal peptide. A propeptide spans 20–24 (AELQR) (removed in mature form). Residues 39-346 (YAGITKIGNQ…NWENKTMGFG (308 aa)) enclose the Peptidase A1 domain. The active site involves Asp-55. 3 disulfides stabilise this stretch: Cys-59/Cys-151, Cys-68/Cys-73, and Cys-75/Cys-136. Asn-117 carries an N-linked (GlcNAc...) asparagine glycan. Residues His-178 and His-186 each contribute to the Zn(2+) site. The active site involves Asp-239. 2 cysteine pairs are disulfide-bonded: Cys-261–Cys-272 and Cys-276–Cys-309. Asn-295 carries N-linked (GlcNAc...) asparagine glycosylation. Zn(2+)-binding residues include Asp-326 and Asp-330. The N-linked (GlcNAc...) asparagine glycan is linked to Asn-340.

It belongs to the peptidase A1 family. In terms of assembly, homodimer.

Functionally, functions as a digestive enzyme in the cockroach. This Blattella germanica (German cockroach) protein is Aspartic protease Bla g 2.